Consider the following 10746-residue polypeptide: MNYRDKIQKFSIRKYTVGTFSTVIATLVFLGLNTSQAQAAETNQPASALKQKQQNGDTQTENREVEVQNSQNGQSLSAPIENEQPNNNQTNHVDASAVQSSTTEHDQPVSQNEQAKKDTAAATPTQSAKAASKHEQSESRAANKKENDNKATHVESHEANVVTASDSSDSGNVQHDRNELQAFFDANYHDYRFIDRENADSGTFNYVKGIFDKINTLLGSNDPINNKDLQLAYKELEQAVALIRTMPQRQQTSRRSSRIQTRSIESRAAEPRSVSDYQNANSSYYVENANDGSGYPVGTYINASSKGAPYNLPTTPWNTLKASDAKEIALITAKQTGDGYQWVIKFNKGHAPHENMIYWFALPAGQTPVGRTEFVTVNADGTNVQWSNGAGAGANKPLPEMWPYGVNDSRSWDYKIRNRSGQVIYDWPTVHINSLKDLARASDYFSEAGATPATKAFGRQTFEYINGERPTESPGVPKVYTFIGKGDASYTISFKTQGPTIDKLYYAAGGRALEYNQLFMYSQLYVESTQDYQQRLNGLRQVVNRTYRIGTTKRVEVSQGNVQTKKVLESTNLNIDDFMDDPLSYVKTPSNKVLGFYPTSANTNAFRPGGVNPLNEYQLSQLFTDDKLQQAARTGSPIRLMIGFDYPDAFGNGETLVPVNLTVLPEIQHNIKFFKNDDGQNIADKPASKQAGHPVFYVYAGNQGNASVNLGGSVTSIQPLRINLTSNENFTDKDWQITGIPRTLHIENSTNRTNNARERNIELVGNLLPGDYFGTIRFGRKEQLFEIRVKPHTPRITTTAEELRGTALQKVPVTVTDIPLDPSALVYLVIPTSQTRDGGSEADQIPSGYTKIATGTPDGVHSTITIRPEDYVVFIPPVGNQIRALIFYNNVVASNMSNAVTILPDDIPPTINNPVGLNAKYYRGDEVSFTMGVSDRHSGLKSTTITTLPSGWTSNLTKSDKKNGSLAISGRVSMNQAYNSDITFKVSATDNVNNTTNDSQSKHVTVHVGKISDDAHPIVLGNSEKVVVVNPTALTGDEKQRITTAFMNKNQNIRGYLASSNPVTVDNHGNVTLQYRDGSSTTLDATNVMTYEPVVKPEYQTANAAKTATVTIAKGQSFNIGDIKQYFTLSNGQAIPSSSFTNITSDRTIPTAQEVSQMNAGTQLYHIVATNAYHKDTEDFYITLKIIDVKQPEGDQRVYRMSTYDITTDEISKVKQAFINANRDAISFAEGDISVTNTPNGSNVSTITVNINKGRLTKSFTSNLNNMNFLRWVNFPQDYTVTWTNAKIANRPTDGGLSWSDDHKSLIYRYDATLGTQITTNDILTLLKATTTVPGLRNNIAGNEKAQAEAGGRPNYKTTGYSQSNPTSDGQRQFTLNGQVIQIMDIINPSNGFGGQPVTNSNVRANHSNSTVVSVNESAANGAGAFTIDHVVKNNSTHNAADAVYKAQLYLSPYGPKQYVEHLNQNTDNTNEAINIYFVPSDLVNPTISVGNYTNHQVFSGETFTNTITANDNFGVQSVTVPTTSQLTGTVDNNHQHVSATAPNVTSTTNKTINLVATDTSGNTATTSFNVTIKPLRDKYRVGTSSTAANPVRIANISNNATVSQADQTAIINSLTFTSNAPNRNYATASANEITSKTVSNVSRTGNNAQVTVTVTYQDGTTSTVTVPVKRVIPEIVAHSHYTVQGQDFPTGNGASASDYFKLSNGSAIPDATITWVSGQAPNKNNTTIGQDINVTAHILIDGETTPITKTATYKVVRTVPKQVFETARGVLYPGVSDMYDAKQYVKPVNNSWSTNAQHMNFQFTNSYGPSKDVVGISTRDIRVTYDNHQTQIIKILSKVKPDPPRIDGNSVTYKAGLTNQQIKINNVLSSSSIKLFKADNTPLTITNTTYGSGNTAVVTVSDALPNGEIKARSSISMNNVTYTTQDEHGRAIDVTRNESVDSNDSASVHVTPQLQATTEGAVFIKGGDGFDFGHVERFIQNPPHGATVAWHDNPDTWKNTVGNTHKTAVVTLPNGQGTRNVEVPVKVYPVANAKAPSRDVKGQNLTNGTDAINYITFDPNTNTNGITAVWANRQQPNNQQAGVQHLNVDVTYPGISAAKRVPVTVNVYQFEFPQTSYTTTVGGTLASGTQASGYAHIQNATGLPTDGFTYKWNNAATGTNDANWAAMNKPNTAQVINAKYDVIYNGHTFATSLPAKFVVKDVQPAKPTVTETAAGVITIAPGANQTVNTHAGNVTTYADKLVIKRNGNVVTTFTRHNNTSPWVKEASAANVAGIAGTNNGITVAAGTFNPADTIQAVATQGSGETISDEQRSDDFTVVAPQPNQATTKIWQNGHVDITPNNPSGHLINPTQAMDIAYTEKVGNGAEHSKTLNAVRGQNNQWTIANKPDYVTLDAHTGKVTFNANTIKPNSAITITPKAGTGHSASSNPSTLTAPAAHTVNTTEIVKDYGSNVTAAEINNAVQVANKRTATIKNGTAMPTNLAGGSTTTIPVTVTYNDSSTEEVQESIFTKADKRELITAKNHLDDPVSTDGKKPGTITQYNNAIHNAQQQINTAKTEAQQVINDERATPQQVNAALSKVQAAQTKINEAKALLQNKEDNSQLVTSKNNLQSSVNQVPSTTGMTQQSIDNYNAKKREAESEITAAQRVIDNGDATAQQISDEKHRVDNALTALNQAKQNLTADTHELEQAVHQLNRTGTTTGKKPASITAYNNSIRALQSDLTSAKNSANAIIQKPIRSVQEVQTALTNVNRVNDRLTLAINQLVPLADNSALRTAKTKLDEEINKSVTTDGMTQSSIQAYENAKRAGQTESTNAQNVINNGDATDQQIAAKKTKVEEKYNGLKQAIAGLTPDLAPLQAAKTQLQNDIDQPTSTTGMTSASVAAFNDKLSAARTKIQEIDRVLASHPDVATIRQNVTAANATKTALDQARNGLTVDKAPLENAKNQLQQSIDTQTSTTGMTQDSINAYNAKLTAARNKIQQINQVLAGSPTVDQINTNTSAANQAKSDLDHARQALTPDKAPLQTAKTQLEQSINQPTDTTGMTTASLNAYNQKLQAARQKLTEINQVLNGNPTVQNINDKVAEANQAKDQLNTARQGLTLDRQPAFTTLHGASNLNQAQQNNFTQQINAAPNHAALETIKSNITALNNAMTKLKDSVADNNSIKSGQNYTDATTANKQAYDNAVNAAKGVIGETTNPTMDVNTVNQKAETVKSTKGALDGQQNLQRAKTEATNAITHASDLNQTQKNALTQQVNNAQNVQAVNDIKQTTQSLNTAMTGLKRGVANHNQVVQSDNYVNADTNKKNDYNNAYNHANDIINGNAQHPVITPSDVNNALSNVTSKEQALNGEAKLNAAKQEANTALGQLNNLNNAQRQNLQSQINGAHQIETVNTIKQNATNLNSAMGNLRQAVADKEQVKRTEDYADADTAKQNAYNSAVSSAETIINQTTNPTMSVNDVNSATSAVTTNKNALNGDEKLAQSKTDAASAIDALPHLNNAQKADVKSKINAASNIAGVNTVKQQGTDLNTAMGNLQGAINDEQTTLNSQNYQDATPSKKTAYTNAVQAAKDILNKSNGQNKTKDQVTEAMNQVNSAKNNLDGTRLLDQAKQTAKQQLNNMTHLTTAQKTHLTNQINSGTTVAGVHTAQSNANTLDQAMNTLRQSIANKDATKASEDYVDANNDKQTAYNNAVAAAETIINANSNPEMNPSTITQKAEQVNSSKTALNGDENLATAKLNAKTYLNTLTSITDAQKNNLISQISSATRVSSVDTVKQNAQHLDQAMASLQNGINNESQVKSSEKYRDADTNKQQEYDNAITAAKAILNKQHGPNTAQNAVEAALQRVKTAKNALNGDAKLIAAQNAAKQHLGTLTHITTAQRNDLTNQISQATNLAGVESVKQSANSLDGAMGNLQTAINDKSGTLASQNFLDADEQKRNAYNQAVSNAETILNKQTGPNTAKTAVEQALNNVNSAKHALNGTQNLNNAKQAAITAINGASDLNQHQKDALKAQANGAQRVSNAQDVQRNATELNTAMGQLQHAIADKTTTLASSKFVNADSTKQNVYTTKVTNAEHIISGTPTVVTTPSEVTAAANQVNSAKQELNGDERLRVAKQNANTAIDALTQLNTPQKAKLKEQVGQANRLEDVQSVQTNGQSLNNAMKGLRDSIANETTVKASQNYTDASPNNQSTYNSAVSNAKGIINQTNNPTMDASAITQATTQVNNAKNGLNGAENLRNAQNTAKQNLNTLSHLTNNQKSAISSQIDRAGHVSEVTAAKNAATELNTQMGNLEQAIHDQNTVKQGVNFTDADKAKRDAYTNAVSRAETILNKTQGANTPKQDVEAAIQSVTSAKNALNGDQNVTNAKNAAKHALNNLTSINNAQKRDLTTKIDQATTVSGVEAVSNTGTQLNTAMANLQNGINDKTNTLASENYHDADSDKKTAYTQAVTNAENILNKNSGSNLDKAAVENALSQVTNAKGALNGNHNLEQAKSNANTTINGLQHLTTAQKDKLKQQVQQAQNVAGVDTVKSSANTLNGAMGTLRNSIQDNAATKNGQNYLDATESNKTNYNNAVDSANGVINATSNPNMDANAINQIATQVTSTKNALDGTHNLTQAKQTATNAIDGATNLNKAQKDALKAQVTSAQRVANVTSIQQTANELNTAMGQLQHGIDDENATKQTQKYRDAEQSKKTAYDQAVAAAKAILNKQTGSNSDKAAVDRALQQVTSTKDALNGDAKLAEAKAAAKQNLGTLNHITNAQRTDLEGQINQATTVDGVNTVKTNANTLDGAMNSLQGSINDKDATLRNQNYLDADESKRNAYTQAVTAAEGILNKQTGGNTSKADVDNALNAVTRAKAALNGADNLRNAKTSATNTINGLPHLTQLQKDNLKHQVEQAQNVAGVNGVKDKGNTLNTAMGALRTSIQNDNTTKTSQNYLDASDINKNNYNTAVNNANGVINATNNPNMDANAINGMANQVNTTKAALNGVQNLAQAKTNATNTINNAHDLNQKQKDALKTQVNNAQRVSDANNVQHTATELNGAMTVLKAAIADKERTKASGNYVNADQEKRQAYDSKVTNAENIINGTPNATLTVNDVNSATSQVNAAKTVLNGDNNLRVAKEHANNTIDGLAQLNNAQKAKLKEQVQSATTLDGVQTVKNSSQTLNTAMKGLRDSIANEATIKAGQNYTDASPNNRNEYDSAVTAAKAIINQTSNPTMEPNTITQATSQVTTKEQALNGAQNLAQAKTTAKNNLNNLTSINNAQKDALTRSIDGATTVAGVNQETVKATELNNAMHSLQNGINDETQTKQTQKYLDAEPSKKSAYDQAVNAAKAILTKASGQNVDKAAVEQALQNVNSTKTALNGDAKLNEAKAAAKQTLGTLTHINNAQRTALDNEITQATNVEGVNTVKAKAQQLDGAMGQLETSIRDKDTTLQSQNYQDADDAKRTAYSQAVNAAATILNKTSGGNTPKADVERAMQAVTQANTALNGIQNLERAKQAANTAITNASDLNTKQKEALKAQVTSAGRVSVANGVEHTATELNTAMTALKRAIADKADTKASGNYVNADANKRQAYDEKVTAAENIVSGTPTPTLTPSDVTNAATQVTNAKTQLNGNHNLEVAKQNANTAIDGLTSLNGPQKAKLKEQVGQATTLPNVQTVRDNAQTLNTAMKGLRDSIANEATIKAEQNYTDASPNNRSEYDSAVTAAKAIIGQTSSPTMNAQEINQAKDQVTAKQQALNGQENLTNAQINAKQHLNGLSDLTNAQKDAAKRQIEGATHVSEVTQAQNNADALNTAMTNLKNGIQDQNTIKQGVNFTDADEAKRNAYTNAVTQAEQILNKVQGPNTAKDNVESALQNVQRAKNDLNGNQNVANAKTTAKNALNNLTSINNAQNEALKSQIDSATTVAGVNQVSATASELNTAMSNLQNGINDEAATKAAQKYTDADSDKQTAYNDAVTAAKTLLDKTAGTNDNKAAVEQALQRVNTAKTALNGDARLNQAKNTAKQQLATMSHLTDAQKANLTSQIERGTTVAGVQGIQANAGTLNEAMNQLRQSIASKDATKASEDYHDANTDLQNAYNDAVTNAEGIISATNNPEMNPDTINQKASQVNSAKSALNGDEKLAAAKQTAKSDIGRLTDLNNAQRTAANAEVDQAPNLAAVTAAKNKATSLNTAMGNLKHALAEKDNTKRSVNYTDADQPKQQAYDTAVTQAEAITNANGSNANETQVQAALNQLNQAKNDLNGDNKVAQAKETAKRALASYSNLNNAQSTAATSQIDNATTVAGVTAAQNTANELNTAMGQLQNGINDQNTVKQQVNFTDADQGKKDAYTNAVTNAQGILDKAHGQNMTKAQVEAALNQVTTAKNALNGDANVRQAKSDAKANLGTLTHLNNAQKQDLTSQIEGATTVNGVNGVKTKAQDLDGAMQRLQSAIANKDQTKASENYIDADPTNKTAFDNAITQAESYLNKDHGANKDKQAVEQAIQSVTSTENALNGDANLQRAKTEATQAIDNLTHLNTPQKTALKQQVNAAQRVSGVTDLKNSATSLNNAMDQLKQAIADHDTIVAGGNYTNASPDKQGAYTDAYNAAKNIVNGSPNVITNAADVTAATQRVNNAETGLNGDTNLATAKQQAKDALRQMTHLSDAQKQSITVQIDNATQVTGVQSVKDNATNLDNAMNQLRNSIANKDEVKASQPYVDADRDKQNAYNTAVTSAENIINATSQPTLDPSAVTQAANQVNTNKTALNGAQNLANKKQETTANINQLSHLNNAQKQDLNTQVTNAPNISTVSQVKTKAEQLDQAMERLINGIQDKDQVKQSVNFTDADPEKQTAYNNAVTAAENIINQANGTNANQSQVEAALSTVTTTKQALNGDRKVTDAKNNANQTLSTLDNLNNAQKGAVTGNINQAHTVAEVTQAIQTAQELNTAMGNLKNSLNDKDTTLGSQNFADADPEKKNAYNEAVRNAENILNKSTGTNVSKDQVEAAMNQVNTTKAALNGTQNLEKAKQHANTAIDGLSHLTNAQKEALKQLVQQSTTVAEAQGNEQKANNVDAAMDKLRQSIADNATTKQNQNYTDSSPNKKDAYNNAVTTAQGIIDQTTSPTLDPTVINQAAGQVSTTKNALNGNENLEAAKQQATQSLGSLDNLNNAQKQAVTDQINGAHTVDEANQIKQNAQNLNTAMGNLKQAIADKDATKATVNFTDADQAKQQAYNTAVTNAENIISKANGGNATQTEVEQAIQQVNAAKQALNGNANVQHAKDEATALINSSNDLNQAQKDALKQQVQNATTVAGVNNVKQTAQELNNAMTQLKQGIADKEQTKADGNFVNADPDKQNAYKQAVAKAEALISGTPDVVVTPSEITAALNKVTQAKNDLNGNTNLATTKQNVQHAIDQLPNLNQAQRDEYSKQITQATLVPNVNAIQQAATTLNDAMTQLKQGIANKAQIKGSENYHDADTDKQTAYDNAVTKAEELLKQTTNPTMDPNTIQQALTKVNDTNQALNGNQKLADAKQAAKTNLGTLDHLNDAQKQALTTQVEQAPDIATVNNVKQNAQNLNNAMTNLSNALQDKTETLNSINFTDADQAKKDAYTNAVAHAEGILSKANGSNASQTEVEQAMQRVNEAKQALNGNDNVQRAKDAAKQVITNANDLNQAQKDALKQQVDAAQTVANVNTIKQTAQDLNQAMTQLKQGIADKDQTKANGNFVNADTDKQNAYNNAVAHAEQIISGTPNANVDPQQVAQALQQVTQAKGDLNGNHNLQVAKDNANTAIDQLPNLNQTQKTALKDQVSHAELVTGVNAIKQNADALNNAMGTLKQQIQANSQVPQSVDFTQADQDKQQAYNNAANQAQQIANGTPTPVLTPDAVTQAVTTMNQAKDALNGDEKLAQAKQDAIANLDTLRDLNQPQRDALRNQINQAQALATVEQTKQNAQNVNTAMSNLKQGIANKDTVKASENYHDADADKQTAYTNAVSQAEGIINQTTNPMLNPDDITRALTQVTDAKNGLNGEAKLATEKQNAKDAVNAMTHLNDAQKQALKGQIDQSPEIAIVNQVKQTATSLDHAMDQLSQAINDKAQTLADGNYLNADPDKQNAYKQAVAKAEALLNKQSGTNEVQAQVESITNEVNAAKQALNGNDNLANAKQQAKQQLANLTHLNDAQKQSFESQITQAPLVTDVTTINQKAQALDHAMDQLSQAINDKAQTLADGNYLNADPDKQNAYKQAVAKAEALLNKQSGTNEVQAQVESITNEVNAAKQALNGNDNLANAKQQAKQQLANLTHLNDAQKQSFESQITQAPLVTDVTTINQKAQALDHAMELLRNSVADNQATLASEDYHDATAQRQNDYNQAVTATNNIINQTTSPTMNPDEVNRATTQVNNTKVALDGDENLVAAKQQANNRLDQLDHLNNAQKQQLQSQITQSSDIAAVNGHKQTAESLNTAMGNLINAIADHQTVEQLGNFVNADTDKQTAYTTAVNEAEAMINKQTGQNANQTEVEQAITKVQTTLQALNGDHNLQVAKANATQAIDALTSLNDPQKTALKDQVTAATLVTAVHQIEQNANTLNQAMHGLRESIQDNAATKANSKYINEDQSEQQNYDQAVQAANNIINEQTATLDNNAINQAATTVNTTKAALHGDVKLQNDKDHAKQTVSQLTHLNNAQKHMEDTLIDSETTRTAVNHDLTEAQALDQLMDALQQSIADKDATRASSAYVNAEPNKKQSYDEAVQNAESIIAGLNNPTINKGNVTSATQAVTSSKNALDGVERLAQDKQTAGNSLNHLDQLTPAQQQALENQINNATTRDKVAEIIAQAQALNEAMKALKESIKDQPQTEASSKFINEDQAQKDAYTQAVQHAKDLINKTTDPTLAKSIIDQATQAVTDAKNNLHGDQKLDQDKQRATETLNNLSNLNTPQRQALENQINNAATRGEVAQKLTEAEALNQAMEALRNSIQDQQQTEAGSKFINEDKPQKDAYQAAVQNAKDLINQTNNPTLDKAQVEQLTQAVNQAKDNLHGDQKLADDKQHAVTDLNQLNGLNNPQRQALESQINNAATRDEVAQKLAEAKALDQAMQALRNSIQDQQQTESGSKFINEDKPQKDAYQAAVQNAKDLINQTGNPTLDKSQVEQLTQAVTTAKDNLHGDQKLARDQLQAVTTVNALPNLNHAQQQALTDAINAAPTRTEVAQHVQTATELDHAMETLKNKVDQVNTDKAQPNYTEASTDKKEAVDQALQAAESITDPTNGSNANKDAVDQALTKLQEKVNELNGNERVAEAKTQAKQTIDQLTHLNADQIATAKQNIDQATKLQPIAELVDQATQLNQSMDQLQQAVNEHANVEQTVDYTQADLDKQNAYKQAIADAENVLKQNANKQQVDQALQNILNAKQALNGDERVALAKTNGKHDIEQLNALNNAQQDGFKGRIDQSNDLNQIQQIVDEAKALNRVMDQLSQGITGNEGRTKGSTNYVNADTQVKQVYDEAVDKAKQALDKSTGQNLTAEQVIKLNDAVTAAKKALNGEEKLNNRKSEALQRLDQLTHLNNAQRQLAIQQINNAETLNKASRAINRATKLDNAMGAVQQYIDEQHLGVISSTNYINADDNLKANYDNAIANAAHELDKVQGNAIAKAEAEQLKQNIIDAQNALNGDQNLANAKDKANAFVNSLNGLNQQQQHLAHNAINNADTVSDVTDIVNNQIDLNDAMETLKHLVDNEIPNAEQTVNYQNAEDNAKTNFDDAKRLANTLLNSDNTNVNDINGAIQTVNDAIQNLNGDQRLQDAKDKAIQSINQALANKLKEIEASNATDQDKLIAKNKAEELANSIINNINKATSNQDVSQVQTAGNHAIEQVHANEIPKAKIDANKDVDKQVQALIDEIDRNPILTDKEKQALKDRINQILQQGHNDINNAMTKEEIEQAKAQLGQALQDIKDLVKAKESAKQDIDKQVQALIDEIDRNPILTDKEKQALKDRINQILQQGHNGINNAMTKEEIEQAKAQLGQALQDIKDLVKAKESAKQDIDKQVQALIDEIDRNPNLTDKEKQALKDRINQILQQGHNGINNAMTKEEIEHAKAQLAQALQDIKDLVKAKEDAKNAIKALANAKRDQINSNPDLTLEQKAKALKEIDEAEKRALENIENAQTKDQLNQGLNLGLDDIRNTHVWEVDAQPAVNEIFDATPEQILVNGELIVHRDDIITEQDILAHINLIDQLTAEIIDTPSTATISDSLTAKVEVTLLDGSKVIVNVPVKVVEKELTVVKQQAIESIENAAQQKINEINNHATLTPEQKEAAIAEVNKLKQQAIEQINNAADVHTVEEVQHQEQAHIEQFNPDQFTIDQAKSNAIKSISDAIQHMIDEINASKDLTDKEKQEAISKLNQLKDQSIQAIQRAQSIDEIAQQLEQFKAQLKAANPFAKELENRKKAAISKIKDISTDKIDRIRNSTIGTAEERQAAMNRINEIVLETIKDINNAQTPQQVEAALNNGIARILAVQIVTSDHSKPSSNSDGQSNSHLHVGYGTVNHPFNSSPIGHKKKLDQDDEIDPLHMRHFGDRIGNVIKNALGVVGISGLLASFWFFIAKRRRKEDEEEELEIRDNSKDKKKGSIEGTKHLPLLFAKRRRKEDEEDAIVEEKDSLNNDESLDKVKHTPFFLPKRRRKEDEEDVEVTNENTDEKVLQDNEHSPVLIAKRLKDKDGNVETTTSIESKDEDVPLLLAKKKNQKDNQSKGKKSASKKPSKKVAAKKKKKKSKKNKK.

Positions 1–39 (MNYRDKIQKFSIRKYTVGTFSTVIATLVFLGLNTSQAQA) are cleaved as a signal peptide. 2 stretches are compositionally biased toward polar residues: residues 41–59 (ETNQ…GDTQ) and 67–113 (VQNS…SQNE). Disordered regions lie at residues 41-174 (ETNQ…GNVQ), 246-274 (MPQR…PRSV), and 1340-1372 (IAGN…DGQR). The span at 120-130 (AAATPTQSAKA) shows a compositional bias: low complexity. A compositionally biased stretch (basic and acidic residues) spans 132–158 (SKHEQSESRAANKKENDNKATHVESHE). A compositionally biased stretch (polar residues) spans 162 to 173 (VTASDSSDSGNV). Positions 248 to 263 (QRQQTSRRSSRIQTRS) are enriched in low complexity. A compositionally biased stretch (polar residues) spans 1356 to 1372 (YKTTGYSQSNPTSDGQR). 59 consecutive FIVAR domains span residues 2520 to 2576 (AKNH…VNAA), 2606 to 2662 (SKNN…ISDE), 2683 to 2746 (DTHE…VQTA), 2776 to 2832 (AKTK…IAAK), 2860 to 2915 (AKTQ…IRQN), 2943 to 2998 (AKNQ…INTN), 3026 to 3081 (AKTQ…INDK), 3150 to 3208 (AMTK…VNQK), 3276 to 3335 (AMTG…VNNA), 3403 to 3461 (AMGN…VNSA), 3529 to 3587 (AMGN…VTEA), 3655 to 3713 (AMNT…ITQK), 3781 to 3839 (AMAS…VEAA), 3907 to 3965 (AMGN…VEQA), 4033 to 4091 (AMGQ…VTAA), 4159 to 4217 (AMKG…ITQA), 4285 to 4343 (QMGN…VEAA), 4411 to 4469 (AMAN…VENA), 4537 to 4595 (AMGT…INQI), 4663 to 4721 (AMGQ…VDRA), 4789 to 4847 (AMNS…VDNA), 4915 to 4973 (AMGA…INGM), 5041 to 5099 (AMTV…VNSA), 5167 to 5225 (AMKG…ITQA), 5293 to 5351 (AMHS…VEQA), 5419 to 5477 (AMGQ…VERA), 5545 to 5603 (AMTA…VTNA), 5671 to 5729 (AMKG…INQA), 5797 to 5855 (AMTN…VESA), 5923 to 5981 (AMSN…VEQA), 6049 to 6107 (AMNQ…INQK), 6175 to 6232 (AMGN…VQAA), 6300 to 6358 (AMGQ…VEAA), 6426 to 6484 (AMQR…VEQA), 6552 to 6610 (AMDQ…VTAA), 6678 to 6736 (AMNQ…VTQA), 6804 to 6862 (AMER…VEAA), 6930 to 6988 (AMGN…VEAA), 7056 to 7114 (AMDK…INQA), 7182 to 7240 (AMGN…VEQA), 7308 to 7366 (AMTQ…ITAA), 7434 to 7492 (AMTQ…IQQA), 7560 to 7618 (AMTN…VEQA), 7686 to 7744 (AMTQ…VAQA), 7812 to 7870 (AMGT…VTQA), 7938 to 7996 (AMSN…ITRA), 8064 to 8125 (AMDQ…ITNE), 8190 to 8251 (AMDQ…ITNE), 8316 to 8374 (AMEL…VNRA), 8442 to 8500 (AMGN…VEQA), 8568 to 8625 (AMHG…INQA), 8693 to 8751 (LMDA…VTSA), 8819 to 8877 (AMKA…IDQA), 8945 to 9003 (AMEA…VEQL), 9071 to 9129 (AMQA…VEQL), 9197 to 9255 (AMET…VDQA), 9323 to 9377 (SMDQ…VDQA), 9445 to 9504 (VMDQ…VIKL), and 9699 to 9755 (AMET…INGA). Positions 7066-7080 (DNATTKQNQNYTDSS) are enriched in polar residues. The segment at 7066 to 7085 (DNATTKQNQNYTDSSPNKKD) is disordered. Positions 10492-10507 (DHSKPSSNSDGQSNSH) are enriched in polar residues. The segment at 10492–10530 (DHSKPSSNSDGQSNSHLHVGYGTVNHPFNSSPIGHKKKL) is disordered. The helical transmembrane segment at 10552-10572 (IKNALGVVGISGLLASFWFFI) threads the bilayer. The tract at residues 10649 to 10746 (RRKEDEEDVE…KKKKSKKNKK (98 aa)) is disordered. Positions 10664–10674 (TDEKVLQDNEH) are enriched in basic and acidic residues. Positions 10719–10746 (KGKKSASKKPSKKVAAKKKKKKSKKNKK) are enriched in basic residues.

It localises to the cell membrane. This chain is Extracellular matrix-binding protein ebh (ebh), found in Staphylococcus aureus (strain MRSA252).